Reading from the N-terminus, the 222-residue chain is uncharacterized protein (222 aa).

This is an uncharacterized protein from Fowlpox virus (strain NVSL) (FPV).